The following is a 226-amino-acid chain: Ribonuclease 3 (226 aa).

Residues 6-128 (INKLQRKLGY…LIGGVFLDSD (123 aa)) enclose the RNase III domain. Glu41 serves as a coordination point for Mg(2+). Residue Asp45 is part of the active site. Mg(2+) is bound by residues Asp114 and Glu117. Glu117 is an active-site residue. The DRBM domain occupies 155–225 (DPKTRLQEFL…AEQALIKLGI (71 aa)).

Belongs to the ribonuclease III family. As to quaternary structure, homodimer. Mg(2+) serves as cofactor.

Its subcellular location is the cytoplasm. The enzyme catalyses Endonucleolytic cleavage to 5'-phosphomonoester.. In terms of biological role, digests double-stranded RNA. Involved in the processing of primary rRNA transcript to yield the immediate precursors to the large and small rRNAs (23S and 16S). Processes some mRNAs, and tRNAs when they are encoded in the rRNA operon. Processes pre-crRNA and tracrRNA of type II CRISPR loci if present in the organism. The sequence is that of Ribonuclease 3 from Erwinia tasmaniensis (strain DSM 17950 / CFBP 7177 / CIP 109463 / NCPPB 4357 / Et1/99).